The following is a 176-amino-acid chain: Interleukin-7 (176 aa).

The signal sequence occupies residues 1 to 25 (MFHVSFRYIFGIPPLILVLLPVASS). 3 cysteine pairs are disulfide-bonded: C27-C165, C58-C153, and C71-C116. N-linked (GlcNAc...) asparagine glycosylation is found at N94, N115, and N140. The disordered stretch occupies residues 118–143 (SKGKGRKPPSLSEAQPTKNLEENKSS).

It belongs to the IL-7/IL-9 family. As to quaternary structure, interacts with IL7R and CSF2RG.

It is found in the secreted. In terms of biological role, hematopoietic cytokine that plays an essential role in the development, expansion, and survival of naive and memory T-cells and B-cells thereby regulating the number of mature lymphocytes and maintaining lymphoid homeostasis. Mechanistically, exerts its biological effects through a receptor composed of IL7RA subunit and the cytokine receptor common subunit gamma/CSF2RG. Binding to the receptor leads to activation of various kinases including JAK1 or JAK3 depending on the cell type and subsequently propagation of signals through activation of several downstream signaling pathways including the PI3K/Akt/mTOR or the JAK-STAT5. This is Interleukin-7 (IL7) from Bos taurus (Bovine).